A 439-amino-acid polypeptide reads, in one-letter code: MKTKKFYQHLYFQVLTAISIGVAVGYYMPDTGTAMKPLGDGFIKMIKMIITPIIFCTVVTGIAGMDDMKKVGRVGGKALLYFEAVSTLALAIGLMVINVIQPGVGMNADVTKLDTKGLATYTATAAKSHSFADFALGIIPNSVVDAFAKGEILQVLFFAILFGLALSAMGEKGKPVYRMIDDVAHAFFGVVNIIMKFAPIGAFGAMAFTIGKFGLGSLTKLGMLMGSFYLTCLLFIFVVLGTIGKLCGFNIFKFISYIKEELLIVLGTSSSESALPRLMAKLENLGCSKSVVGLVIPTGYSFNLDGTSIYLTMAAVFVAQATNTPLDLTQTLTILGVLMLTSKGAAGVTGSGFVTLAATFAAIPTIPVAGLALILGIDRFMSEARALTNLVGNGVATVVVSRWENELNATRMSQVLNKELDEAAVEADLLMMDPEPEEA.

A run of 9 helical transmembrane segments spans residues 9 to 29 (HLYF…YYMP), 45 to 65 (MIKM…IAGM), 80 to 100 (LYFE…INVI), 150 to 170 (GEIL…SAMG), 186 to 206 (AFFG…FGAM), 221 to 241 (LGML…VVLG), 291 to 311 (VVGL…SIYL), 334 to 354 (ILGV…SGFV), and 357 to 377 (AATF…ILGI).

It belongs to the dicarboxylate/amino acid:cation symporter (DAACS) (TC 2.A.23) family.

Its subcellular location is the cell inner membrane. In terms of biological role, responsible for the transport of dicarboxylates such as succinate, fumarate, and malate from the periplasm across the membrane. In Citrifermentans bemidjiense (strain ATCC BAA-1014 / DSM 16622 / JCM 12645 / Bem) (Geobacter bemidjiensis), this protein is C4-dicarboxylate transport protein.